The following is a 161-amino-acid chain: Vitamin K-dependent protein C (161 aa).

One can recognise a Peptidase S1 domain in the interval 1 to 161; it reads EKWELDLDIE…GCGLLHNYGV (161 aa). Asn17 carries N-linked (GlcNAc...) asparagine glycosylation. Asp26 acts as the Charge relay system in catalysis. N-linked (GlcNAc...) asparagine glycosylation is present at Asn82. 2 disulfides stabilise this stretch: Cys100-Cys114 and Cys125-Cys153. Ser129 serves as the catalytic Charge relay system.

The protein belongs to the peptidase S1 family. Plasma; synthesized in the liver.

Its subcellular location is the secreted. It is found in the golgi apparatus. The protein localises to the endoplasmic reticulum. The catalysed reaction is Degradation of blood coagulation factors Va and VIIIa.. Its function is as follows. Protein C is a vitamin K-dependent serine protease that regulates blood coagulation by inactivating factors Va and VIIIa in the presence of calcium ions and phospholipids. Exerts a protective effect on the endothelial cell barrier function. This is Vitamin K-dependent protein C (PROC) from Macaca mulatta (Rhesus macaque).